Here is a 196-residue protein sequence, read N- to C-terminus: MPTSAAPVPAVAAQSPTTRKAIANNFRELTKDPKKLDEAANQLYESLLEDAVTGIFIEVHHLRKIGNLSALDGVAEESAHRICDVPNLDIFGVSTAKKAIDCTCPNCDRLVAAARFAPHLEKCMGMGRISSRIASRRLATKEGTSASSNSSYVHSGANAGGTDDEDDVDWSSDKRKKKSTQNSRNNGSKKNNGKTF.

The SGF11-type zinc-finger motif lies at 102–123 (CTCPNCDRLVAAARFAPHLEKC). Residues 140-196 (TKEGTSASSNSSYVHSGANAGGTDDEDDVDWSSDKRKKKSTQNSRNNGSKKNNGKTF) form a disordered region. The segment covering 142-153 (EGTSASSNSSYV) has biased composition (polar residues). Phosphoserine is present on Ser172. A compositionally biased stretch (low complexity) spans 182–196 (NSRNNGSKKNNGKTF).

The protein belongs to the SGF11 family. In terms of assembly, component of some SAGA transcription coactivator-HAT complexes, at least composed of Ada2b, not/nonstop, Pcaf/Gcn5, Sgf11 and Spt3. Within the SAGA complex, Sgf11, e(y)2, and not/nonstop form an additional subcomplex of SAGA called the DUB module (deubiquitination module). Interacts directly with not/nonstop. Interacts with the AMEX complex component xmas-2. Interacts with Cbp80; important for promoter recruitment of Sgf11 that is not associated with the DUB module.

It is found in the nucleus. The protein localises to the nucleoplasm. It localises to the cytoplasm. In terms of biological role, component of the transcription regulatory histone acetylation (HAT) complex SAGA, a multiprotein complex that activates transcription by remodeling chromatin and mediating histone acetylation and deubiquitination. Within the SAGA complex, participates in a subcomplex that specifically deubiquitinates histone H2B. The SAGA complex is recruited to specific gene promoters by activators, where it is required for transcription. Required for nuclear receptor-mediated transactivation. Binds independently on SAGA to promoters in an RNA-dependent manner. Binds to mRNA and is essential for total mRNA export from the nucleus. Required to counteract heterochromatin silencing. Controls the development of neuronal connectivity in visual system by being required for accurate axon targeting in the optic lobe. Required for expression of ecdysone-induced genes such as br/broad. The chain is SAGA-associated factor 11 homolog from Drosophila persimilis (Fruit fly).